Consider the following 164-residue polypeptide: Transcriptional repressor NrdR (164 aa).

A zinc finger lies at C3–C34. In terms of domain architecture, ATP-cone spans L49–E139.

Belongs to the NrdR family. Zn(2+) serves as cofactor.

Negatively regulates transcription of bacterial ribonucleotide reductase nrd genes and operons by binding to NrdR-boxes. This Streptococcus uberis (strain ATCC BAA-854 / 0140J) protein is Transcriptional repressor NrdR.